The primary structure comprises 204 residues: Arginine exporter protein ArgO (204 aa).

6 consecutive transmembrane segments (helical) span residues 1-21 (MFAV…PLGP), 37-57 (LMVA…GIFG), 67-87 (LLLG…GWGA), 111-131 (IIAT…DTFV), 147-167 (WFAL…ALLA), and 179-199 (VQRV…LQLA).

It belongs to the LysE/ArgO transporter (TC 2.A.75) family.

It is found in the cell inner membrane. The catalysed reaction is L-arginine(in) = L-arginine(out). In terms of biological role, involved in the export of arginine. Important to control the intracellular level of arginine and the correct balance between arginine and lysine. This is Arginine exporter protein ArgO from Pectobacterium carotovorum subsp. carotovorum (strain PC1).